The primary structure comprises 438 residues: 3-phosphoshikimate 1-carboxyvinyltransferase (438 aa).

3-phosphoshikimate contacts are provided by lysine 26, serine 27, and arginine 31. Lysine 26 provides a ligand contact to phosphoenolpyruvate. 2 residues coordinate phosphoenolpyruvate: glycine 99 and arginine 127. Residues serine 170, serine 171, glutamine 172, serine 199, glutamate 314, and histidine 343 each contribute to the 3-phosphoshikimate site. A phosphoenolpyruvate-binding site is contributed by glutamine 172. The active-site Proton acceptor is glutamate 314. Residues arginine 347, arginine 388, and lysine 413 each contribute to the phosphoenolpyruvate site.

It belongs to the EPSP synthase family. Monomer.

It localises to the cytoplasm. It catalyses the reaction 3-phosphoshikimate + phosphoenolpyruvate = 5-O-(1-carboxyvinyl)-3-phosphoshikimate + phosphate. Its pathway is metabolic intermediate biosynthesis; chorismate biosynthesis; chorismate from D-erythrose 4-phosphate and phosphoenolpyruvate: step 6/7. In terms of biological role, catalyzes the transfer of the enolpyruvyl moiety of phosphoenolpyruvate (PEP) to the 5-hydroxyl of shikimate-3-phosphate (S3P) to produce enolpyruvyl shikimate-3-phosphate and inorganic phosphate. The protein is 3-phosphoshikimate 1-carboxyvinyltransferase of Mycobacterium sp. (strain MCS).